A 158-amino-acid chain; its full sequence is NAD(P)H-quinone oxidoreductase subunit J, chloroplastic (158 aa).

Belongs to the complex I 30 kDa subunit family. As to quaternary structure, NDH is composed of at least 16 different subunits, 5 of which are encoded in the nucleus.

The protein localises to the plastid. The protein resides in the chloroplast thylakoid membrane. It catalyses the reaction a plastoquinone + NADH + (n+1) H(+)(in) = a plastoquinol + NAD(+) + n H(+)(out). The catalysed reaction is a plastoquinone + NADPH + (n+1) H(+)(in) = a plastoquinol + NADP(+) + n H(+)(out). In terms of biological role, NDH shuttles electrons from NAD(P)H:plastoquinone, via FMN and iron-sulfur (Fe-S) centers, to quinones in the photosynthetic chain and possibly in a chloroplast respiratory chain. The immediate electron acceptor for the enzyme in this species is believed to be plastoquinone. Couples the redox reaction to proton translocation, and thus conserves the redox energy in a proton gradient. The chain is NAD(P)H-quinone oxidoreductase subunit J, chloroplastic from Aethionema cordifolium (Lebanon stonecress).